The primary structure comprises 324 residues: Glycerol-3-phosphate dehydrogenase [NAD(P)+] (324 aa).

NADPH-binding residues include Trp-15, Arg-35, and Lys-101. Positions 101 and 129 each coordinate sn-glycerol 3-phosphate. Ala-133 serves as a coordination point for NADPH. The sn-glycerol 3-phosphate site is built by Lys-184, Asp-237, Ser-247, Arg-248, and Asn-249. The Proton acceptor role is filled by Lys-184. Position 248 (Arg-248) interacts with NADPH. NADPH-binding residues include Val-272 and Glu-274.

Belongs to the NAD-dependent glycerol-3-phosphate dehydrogenase family.

It is found in the cytoplasm. The catalysed reaction is sn-glycerol 3-phosphate + NAD(+) = dihydroxyacetone phosphate + NADH + H(+). The enzyme catalyses sn-glycerol 3-phosphate + NADP(+) = dihydroxyacetone phosphate + NADPH + H(+). It participates in membrane lipid metabolism; glycerophospholipid metabolism. Catalyzes the reduction of the glycolytic intermediate dihydroxyacetone phosphate (DHAP) to sn-glycerol 3-phosphate (G3P), the key precursor for phospholipid synthesis. The polypeptide is Glycerol-3-phosphate dehydrogenase [NAD(P)+] (Gluconobacter oxydans (strain 621H) (Gluconobacter suboxydans)).